A 637-amino-acid chain; its full sequence is MSQQETHGFQTEVKQLLHLMIHSLYSNKEIFLRELVSNAADAADKLRYLALTNDALYEGDGELRVRISADKEKGTVTIEDNGVGMTRDGVIEHLGTIAKSGTAEFFKNLSGEASKDSQLIGQFGVGFYSAFIVAKKVTVRTRAAGHKANEAVLWESEGEGSFTVETITKATRGTEITLHLRDDEKEFADDWRLRSIITKYSDHISIPVEMWQEGTPERDGPDGEKIPATEGYWKAMNKATALWMRNKSEITDEEYQEFYKHISHDYTDALLWSHNRVEGKQEYTNLLYIPSKAPWDLWNRDRKHGLKLFVQRVFIMDDAEQFMPSYLRFVQGLIDSNDLPLNVSREILQDNHITKAMRTGITKRVLGMLEKLAKDDAEKYQQFWAEFGQVLKEGPAEDFANRERIAGLLRFASTHTGSAAPTVSLDDYISRMKEGQTKIYYIVADSHEAAANSPHLELLRKKGIEVLLMSERIDEWLINHLTEYKEKQLHSVTRGELELGELEDAAEKEAQEKLAEESAPLIERIKAALGASVADVKVTSRLTDTPACVVTGEGEMSTQMIKLMQAAGQPVPEVKPTFEVNPAHPLVSRLNDLQDEAAFADWSNLLLQQAQLSEKGSLADPSAFIKLMNQMLLANLK.

The tract at residues methionine 1–arginine 345 is a; substrate-binding. Residues glutamate 346–lysine 562 are b. A c region spans residues leucine 563 to lysine 637.

Belongs to the heat shock protein 90 family. In terms of assembly, homodimer.

It localises to the cytoplasm. In terms of biological role, molecular chaperone. Has ATPase activity. This Shewanella oneidensis (strain ATCC 700550 / JCM 31522 / CIP 106686 / LMG 19005 / NCIMB 14063 / MR-1) protein is Chaperone protein HtpG.